The chain runs to 100 residues: Large ribosomal subunit protein bL27 (100 aa).

Positions 1–9 are excised as a propeptide; sequence MLVMNLQLF.

Belongs to the bacterial ribosomal protein bL27 family. The N-terminus is cleaved by ribosomal processing cysteine protease Prp.

The polypeptide is Large ribosomal subunit protein bL27 (Clostridium botulinum (strain Hall / ATCC 3502 / NCTC 13319 / Type A)).